A 438-amino-acid chain; its full sequence is Putative B3 domain-containing protein Os04g0676650 (438 aa).

Positions 1–11 are enriched in low complexity; sequence MADARGSSSSS. 2 disordered regions span residues 1–30 and 225–285; these read MADA…DFVG and SSSH…MNQN. A compositionally biased stretch (gly residues) spans 12-30; the sequence is GDGGGGEGKGGAGHGDFVG. Residues 258–269 are compositionally biased toward basic and acidic residues; it reads RRSDMESEKNDD. Over residues 272-285 the composition is skewed to polar residues; that stretch reads DQTPVSEPPSMNQN. Residues 302-404 constitute a DNA-binding region (TF-B3); the sequence is LRKELTNSDV…KFVVRGEKAI (103 aa).

It localises to the nucleus. This is Putative B3 domain-containing protein Os04g0676650 from Oryza sativa subsp. japonica (Rice).